The sequence spans 90 residues: UPF0223 protein LMHCC_1569 (90 aa).

The protein belongs to the UPF0223 family.

This chain is UPF0223 protein LMHCC_1569, found in Listeria monocytogenes serotype 4a (strain HCC23).